A 232-amino-acid polypeptide reads, in one-letter code: 2-C-methyl-D-erythritol 4-phosphate cytidylyltransferase (232 aa).

This sequence belongs to the IspD/TarI cytidylyltransferase family. IspD subfamily.

It catalyses the reaction 2-C-methyl-D-erythritol 4-phosphate + CTP + H(+) = 4-CDP-2-C-methyl-D-erythritol + diphosphate. It participates in isoprenoid biosynthesis; isopentenyl diphosphate biosynthesis via DXP pathway; isopentenyl diphosphate from 1-deoxy-D-xylulose 5-phosphate: step 2/6. In terms of biological role, catalyzes the formation of 4-diphosphocytidyl-2-C-methyl-D-erythritol from CTP and 2-C-methyl-D-erythritol 4-phosphate (MEP). The polypeptide is 2-C-methyl-D-erythritol 4-phosphate cytidylyltransferase (Nitrosospira multiformis (strain ATCC 25196 / NCIMB 11849 / C 71)).